Reading from the N-terminus, the 430-residue chain is Flavin-dependent monooxygenase eupH (430 aa).

FAD is bound by residues 11–14, 33–34, Gln43, Arg107, Tyr282, and Asp306; these read AGIG and ER.

This sequence belongs to the aromatic-ring hydroxylase family. FAD is required as a cofactor.

It participates in secondary metabolite biosynthesis; terpenoid biosynthesis. Its function is as follows. Flavin-dependent monooxygenase; part of the gene cluster that mediates the biosynthesis of eupenifeldin, a bistropolone meroterpenoid that acts as an antitumor agent. The first step of eupenifeldin biosynthesis is the biosynthesis of 3-methylorcinaldehyde performed by the non-reducing polyketide synthase eupA. Oxidative dearomatization of 3-methylorcinaldehyde likely catalyzed by the FAD-dependent monooxygenase eupB is followed by oxidative ring expansion by the 2-oxoglutarate-dependent dioxygenase eupC to provide the first tropolone metabolite, tropolone stipitaldehyde. In parallel, generation of sesquiterpene alpha-humulene from farnesylpyrophosphate (FPP) is catalyzed by the terpene cyclase eupE. The cytochrome P450 monooxygenase eupD then hydroxylates humulene to humulenol. The putative Diels-Alderase eupF probably catalyzes the formation of the tropolone-humulene skeleton by linking humulenol and the polyketide moiety. The short-chain dehydrogenase/reductase eupG and the flavin-dependent monooxygenase eupH are also essential for eupenifeldin biosynthesis and are likely the additional decorating enzymes of the tropolone-humulene skeleton to produce final eupenifeldin or derivatives. The chain is Flavin-dependent monooxygenase eupH from Phoma sp.